A 342-amino-acid chain; its full sequence is DNA primase small subunit PriS (342 aa).

Catalysis depends on residues Asp97, Asp99, and Asp236.

This sequence belongs to the eukaryotic-type primase small subunit family. Heterodimer of a small subunit (PriS) and a large subunit (PriL). Requires Mg(2+) as cofactor. Mn(2+) is required as a cofactor.

In terms of biological role, catalytic subunit of DNA primase, an RNA polymerase that catalyzes the synthesis of short RNA molecules used as primers for DNA polymerase during DNA replication. The small subunit contains the primase catalytic core and has DNA synthesis activity on its own. Binding to the large subunit stabilizes and modulates the activity, increasing the rate of DNA synthesis while decreasing the length of the DNA fragments, and conferring RNA synthesis capability. The DNA polymerase activity may enable DNA primase to also catalyze primer extension after primer synthesis. May also play a role in DNA repair. The chain is DNA primase small subunit PriS from Aeropyrum pernix (strain ATCC 700893 / DSM 11879 / JCM 9820 / NBRC 100138 / K1).